The primary structure comprises 382 residues: Type 2 DNA topoisomerase 6 subunit A (382 aa).

The 142-residue stretch at Y14–Y155 folds into the Topo IIA-type catalytic domain. Y108 acts as the O-(5'-phospho-DNA)-tyrosine intermediate in catalysis. Mg(2+)-binding residues include E202 and D254.

It belongs to the TOP6A family. In terms of assembly, homodimer. Heterotetramer of two Top6A and two Top6B chains. Requires Mg(2+) as cofactor.

The enzyme catalyses ATP-dependent breakage, passage and rejoining of double-stranded DNA.. In terms of biological role, relaxes both positive and negative superturns and exhibits a strong decatenase activity. This Pyrococcus abyssi (strain GE5 / Orsay) protein is Type 2 DNA topoisomerase 6 subunit A.